We begin with the raw amino-acid sequence, 455 residues long: Serine--tRNA ligase (455 aa).

252–254 (TAE) provides a ligand contact to L-serine. ATP is bound by residues 283–285 (RKE) and valine 299. An L-serine-binding site is contributed by glutamate 306. 370-373 (EVVS) lines the ATP pocket. Threonine 406 provides a ligand contact to L-serine.

This sequence belongs to the class-II aminoacyl-tRNA synthetase family. Type-1 seryl-tRNA synthetase subfamily. As to quaternary structure, homodimer. The tRNA molecule binds across the dimer.

It localises to the cytoplasm. The enzyme catalyses tRNA(Ser) + L-serine + ATP = L-seryl-tRNA(Ser) + AMP + diphosphate + H(+). It catalyses the reaction tRNA(Sec) + L-serine + ATP = L-seryl-tRNA(Sec) + AMP + diphosphate + H(+). It functions in the pathway aminoacyl-tRNA biosynthesis; selenocysteinyl-tRNA(Sec) biosynthesis; L-seryl-tRNA(Sec) from L-serine and tRNA(Sec): step 1/1. Functionally, catalyzes the attachment of serine to tRNA(Ser). Is also able to aminoacylate tRNA(Sec) with serine, to form the misacylated tRNA L-seryl-tRNA(Sec), which will be further converted into selenocysteinyl-tRNA(Sec). In Pyrococcus furiosus (strain ATCC 43587 / DSM 3638 / JCM 8422 / Vc1), this protein is Serine--tRNA ligase.